The primary structure comprises 831 residues: G-type lectin S-receptor-like serine/threonine-protein kinase At1g61390 (831 aa).

The N-terminal stretch at 1–42 (MYKLPQRNCADKQEYTVHMRKMGMVIFACLLLLIIFPTFGYA) is a signal peptide. A Bulb-type lectin domain is found at 43-162 (DINTSSPLSI…VSGKTLWKSF (120 aa)). The Extracellular segment spans residues 43 to 448 (DINTSSPLSI…SSELAGSNRT (406 aa)). 4 N-linked (GlcNAc...) asparagine glycosylation sites follow: asparagine 45, asparagine 71, asparagine 106, and asparagine 112. The EGF-like; atypical domain maps to 298–334 (PTSSCDLYRACGPFGLCVRSRNPKCICLKGFVPKSDD). 2 disulfide bridges follow: cysteine 302–cysteine 314 and cysteine 308–cysteine 322. Residues asparagine 340, asparagine 356, asparagine 399, and asparagine 446 are each glycosylated (N-linked (GlcNAc...) asparagine). A PAN domain is found at 353–439 (CHTNSSTKTQ…GESLSLRLAS (87 aa)). Cystine bridges form between cysteine 392/cysteine 413 and cysteine 396/cysteine 402. The helical transmembrane segment at 449–469 (KIILGTTVSLSIFVILVFAAY) threads the bilayer. Topologically, residues 470-831 (KSWRYRTKQN…EITQSVIQGR (362 aa)) are cytoplasmic. Residues 520-803 (FSSSNKLGQG…ELPSPKQPTF (284 aa)) form the Protein kinase domain. ATP is bound by residues 526-534 (LGQGGFGPV) and lysine 548. Residues serine 554 and serine 569 each carry the phosphoserine modification. The tract at residues 609 to 626 (TLKFEIDWQKRFNIIQGV) is caM-binding. Residue aspartate 645 is the Proton acceptor of the active site. Phosphoserine is present on residues serine 649 and serine 662. Phosphothreonine is present on threonine 679. Serine 722 and serine 814 each carry phosphoserine.

Belongs to the protein kinase superfamily. Ser/Thr protein kinase family.

Its subcellular location is the cell membrane. It catalyses the reaction L-seryl-[protein] + ATP = O-phospho-L-seryl-[protein] + ADP + H(+). The enzyme catalyses L-threonyl-[protein] + ATP = O-phospho-L-threonyl-[protein] + ADP + H(+). The chain is G-type lectin S-receptor-like serine/threonine-protein kinase At1g61390 from Arabidopsis thaliana (Mouse-ear cress).